The chain runs to 295 residues: Cyclic dipyrimidine nucleotide synthase CdnE (295 aa).

The disordered stretch occupies residues 1-28 (MAKYTEDQLTSWTKPPSDSEQTKLENSE). Polar residues predominate over residues 7–19 (DQLTSWTKPPSDS). The UTP site is built by Gln-51 and Ser-53. Asp-67 contacts Mg(2+). UTP contacts are provided by Lys-123, Asn-169, Arg-197, Phe-217, and Lys-276. A Pyrimidine specificity motif (R/Q)xW in donor pocket motif is present at residues 275–277 (RKW).

The protein belongs to the CD-NTase family. E02 subfamily. In terms of assembly, monomer. It depends on Mg(2+) as a cofactor.

It catalyses the reaction 2 UTP = c-di-UMP + 2 diphosphate. The catalysed reaction is UTP + CTP = cyclic CMP-UMP + 2 diphosphate. Cyclic nucleotide synthase (second messenger synthase) of a CBASS antivirus system. CBASS (cyclic oligonucleotide-based antiphage signaling system) provides immunity against bacteriophage. The CD-NTase protein synthesizes cyclic nucleotides in response to infection; these serve as specific second messenger signals. The signals activate a diverse range of effectors, leading to bacterial cell death and thus abortive phage infection. A type I-B(UU) CBASS system. This is Cyclic dipyrimidine nucleotide synthase CdnE from Cecembia lonarensis (strain CCUG 58316 / KCTC 22772 / LW9).